Consider the following 712-residue polypeptide: Lactoperoxidase (712 aa).

The signal sequence occupies residues 1 to 22 (MWVCLQLPVFLASVTLFEVAAS). The propeptide occupies 23–100 (DTIAQAASTT…WEESFKRLRR (78 aa)). The N-linked (GlcNAc...) (complex) asparagine; alternate glycan is linked to N106. A glycan (N-linked (GlcNAc...) (hybrid) asparagine; alternate) is linked at N106. 4 cysteine pairs are disulfide-bonded: C123/C284, C132/C145, C246/C256, and C250/C274. N-linked (GlcNAc...) (complex) asparagine; alternate glycosylation occurs at N212. The N-linked (GlcNAc...) (high mannose) asparagine; alternate glycan is linked to N212. D225 provides a ligand contact to heme b. The active-site Proton acceptor is the H226. D227 is a Ca(2+) binding site. 4 residues coordinate Ca(2+): T301, F303, D305, and S307. Phosphoserine is present on S315. N-linked (GlcNAc...) (high mannose) asparagine glycosylation occurs at N322. Residues C354 and C365 are joined by a disulfide bond. The N-linked (GlcNAc...) asparagine glycan is linked to N358. E375 is a binding site for heme b. N449 carries N-linked (GlcNAc...) (complex) asparagine; alternate glycosylation. N-linked (GlcNAc...) (hybrid) asparagine; alternate glycosylation occurs at N449. N449 carries an N-linked (GlcNAc...) (high mannose) asparagine; alternate glycan. H468 provides a ligand contact to heme b. Y482 is modified (3'-nitrotyrosine). Intrachain disulfides connect C573-C630 and C671-C696.

Belongs to the peroxidase family. XPO subfamily. It depends on Ca(2+) as a cofactor. Requires heme b as cofactor. As to expression, mammary gland; milk.

It is found in the secreted. It localises to the cytoplasm. The catalysed reaction is 2 a phenolic donor + H2O2 = 2 a phenolic radical donor + 2 H2O. The enzyme catalyses thiocyanate + H2O2 + H(+) = hypothiocyanous acid + H2O. It carries out the reaction iodide + H2O2 = hypoiodite + H2O. In terms of biological role, heme-containing oxidoreductase which catalyzes the conversion of thiocyanate (SCN(-)) into antimicrobial agent hypothiocyanous acid (OSCN(-)) in the presence of hydrogen peroxide (H2O2). Also involved in the conversion of iodide (I(-)) into hypoiodite (IO(-)) in the presence of H2O2. Responsible for the inactivation of a wide range of micro-organisms and hence, important component of defense mechanism. Shows antibacterial properties against E.coli, K.pneumoniae, P.aeruginosa, S.sonnei, S.saphrophyticus, S.epidermidis and S.dysenteriae. May protect the udder from infection and may promote growth in newborns. May be implicated in airway host defense against infection. May contribute to maintaining an appropriate H2O2 cellular level, therefore protecting cells from H2O2-caused injuries and inflammation. This Bubalus bubalis (Domestic water buffalo) protein is Lactoperoxidase.